Here is a 267-residue protein sequence, read N- to C-terminus: 22 kDa alpha-zein 14 (267 aa).

The N-terminal stretch at 1 to 21 is a signal peptide; it reads MATKILSLLALLALFASATNA.

It belongs to the zein family.

Functionally, zeins are major seed storage proteins. The chain is 22 kDa alpha-zein 14 from Zea mays (Maize).